Consider the following 536-residue polypeptide: Indolin-2-one monooxygenase (536 aa).

Residues 18-34 traverse the membrane as a helical segment; sequence GTATHALLLGVLIFLVI. Cysteine 480 contributes to the heme binding site.

Belongs to the cytochrome P450 family. It depends on heme as a cofactor.

The protein localises to the membrane. The enzyme catalyses indolin-2-one + reduced [NADPH--hemoprotein reductase] + O2 = 3-hydroxyindolin-2-one + oxidized [NADPH--hemoprotein reductase] + H2O + H(+). The protein operates within secondary metabolite biosynthesis; 2,4-dihydroxy-1,4-benzoxazin-3-one biosynthesis; 2,4-dihydroxy-1,4-benzoxazin-3-one from indoleglycerol phosphate: step 3/5. Catalyzes the conversion of indolin-2-one to 3-hydroxyindolin-2-one. The chain is Indolin-2-one monooxygenase (CYP71C2) from Zea mays (Maize).